The chain runs to 100 residues: MELTPREKDKLLLFTAALVAERRLARGVTLNYPESVALISAFIMEGARDGQTVAELMEAGRHVLTRAQVMEGVPEMIPDIQVEATFPDGSKLVTVHNPIV.

It belongs to the urease gamma subunit family. Heterotrimer of UreA (gamma), UreB (beta) and UreC (alpha) subunits. Three heterotrimers associate to form the active enzyme.

Its subcellular location is the cytoplasm. The catalysed reaction is urea + 2 H2O + H(+) = hydrogencarbonate + 2 NH4(+). Its pathway is nitrogen metabolism; urea degradation; CO(2) and NH(3) from urea (urease route): step 1/1. This is Urease subunit gamma from Enterobacter sp. (strain 638).